The following is a 428-amino-acid chain: 3-phosphoshikimate 1-carboxyvinyltransferase (428 aa).

Residues K23, S24, and R28 each contribute to the 3-phosphoshikimate site. K23 contributes to the phosphoenolpyruvate binding site. Residues G97 and R125 each coordinate phosphoenolpyruvate. 3-phosphoshikimate is bound by residues S170, S171, Q172, S198, D314, N337, and K341. Q172 lines the phosphoenolpyruvate pocket. D314 serves as the catalytic Proton acceptor. 3 residues coordinate phosphoenolpyruvate: R345, R387, and K412.

This sequence belongs to the EPSP synthase family. Monomer.

The protein resides in the cytoplasm. The enzyme catalyses 3-phosphoshikimate + phosphoenolpyruvate = 5-O-(1-carboxyvinyl)-3-phosphoshikimate + phosphate. It participates in metabolic intermediate biosynthesis; chorismate biosynthesis; chorismate from D-erythrose 4-phosphate and phosphoenolpyruvate: step 6/7. Functionally, catalyzes the transfer of the enolpyruvyl moiety of phosphoenolpyruvate (PEP) to the 5-hydroxyl of shikimate-3-phosphate (S3P) to produce enolpyruvyl shikimate-3-phosphate and inorganic phosphate. In Hamiltonella defensa subsp. Acyrthosiphon pisum (strain 5AT), this protein is 3-phosphoshikimate 1-carboxyvinyltransferase.